The chain runs to 335 residues: Methionyl-tRNA formyltransferase (335 aa).

122-125 (SLLP) serves as a coordination point for (6S)-5,6,7,8-tetrahydrofolate. Positions 203–222 (DSHGPLGEPQDPAKVSKAPR) are disordered.

It belongs to the Fmt family.

It catalyses the reaction L-methionyl-tRNA(fMet) + (6R)-10-formyltetrahydrofolate = N-formyl-L-methionyl-tRNA(fMet) + (6S)-5,6,7,8-tetrahydrofolate + H(+). Functionally, attaches a formyl group to the free amino group of methionyl-tRNA(fMet). The formyl group appears to play a dual role in the initiator identity of N-formylmethionyl-tRNA by promoting its recognition by IF2 and preventing the misappropriation of this tRNA by the elongation apparatus. The chain is Methionyl-tRNA formyltransferase from Rhodopirellula baltica (strain DSM 10527 / NCIMB 13988 / SH1).